Reading from the N-terminus, the 438-residue chain is Asparagine--tRNA ligase (438 aa).

Belongs to the class-II aminoacyl-tRNA synthetase family. Homodimer.

The protein resides in the cytoplasm. It carries out the reaction tRNA(Asn) + L-asparagine + ATP = L-asparaginyl-tRNA(Asn) + AMP + diphosphate + H(+). The sequence is that of Asparagine--tRNA ligase from Thermus thermophilus (strain ATCC 27634 / DSM 579 / HB8).